The primary structure comprises 1110 residues: Nonribisomal peptide synthetase benY (1110 aa).

Residues 47–443 are adenylation; it reads RALEFPEKIA…GRKDHQLKVR (397 aa). One can recognise a Carrier domain in the interval 575 to 651; that stretch reads TLETESEKIL…EMAQSARVVP (77 aa). Position 612 is an O-(pantetheine 4'-phosphoryl)serine (Ser-612). The condensation stretch occupies residues 713–1025; the sequence is YILDGDVDFD…IFHHQNIDTK (313 aa).

It belongs to the NRP synthetase family.

It participates in secondary metabolite biosynthesis. Nonribisomal peptide synthetase; part of the gene cluster that mediates the biosynthesis of benzomalvin A and D. The pathway begins with the loading of amino acid precursors onto the A domains of the non ribosomal peptide synthetases benY and benZ. BenY and the A1 domain of benZ are loaded with anthranilate (Anth), while the A2 domain of benZ is loaded with phenylalanine (Phe). N-methylation of Phe by the methyltransferase benX may happen before loading of Phe onto benZ, after loading of Phe, or after dipeptide formation. Condensation of Anth with the secondary amine of NmPhe or Phe is catalyzed by the C1 domain of benZ, forming a dipeptide intermediate. This is followed by in trans condensation of the Anth-NmPhe dipeptide with Anth bound to the T domain of benY by the C2 domain of benZ to form the linear tripeptide Anth-NmPhe-Anth. Cyclization and release of the tripeptide is then catalyzed by the C-terminal C domain of benY and the resulting 11-member macrocyclic intermediate is expected to spontaneously collapse to form the benzodiazepine core. Benzomalvin A is in conformational equilibrium with its atropisomer, benzomalvin D. This chain is Nonribisomal peptide synthetase benY, found in Aspergillus terreus.